A 277-amino-acid chain; its full sequence is Formamidopyrimidine-DNA glycosylase (277 aa).

The active-site Schiff-base intermediate with DNA is Pro-2. The active-site Proton donor is Glu-3. The active-site Proton donor; for beta-elimination activity is the Lys-60. Residues His-94, Arg-113, and Arg-156 each coordinate DNA. The FPG-type zinc-finger motif lies at 241–275 (KVYNREGLPCPHCGKPIQRIKVAGRSSYYCSSCQK). The active-site Proton donor; for delta-elimination activity is Arg-265.

Belongs to the FPG family. As to quaternary structure, monomer. Zn(2+) is required as a cofactor.

It carries out the reaction Hydrolysis of DNA containing ring-opened 7-methylguanine residues, releasing 2,6-diamino-4-hydroxy-5-(N-methyl)formamidopyrimidine.. The catalysed reaction is 2'-deoxyribonucleotide-(2'-deoxyribose 5'-phosphate)-2'-deoxyribonucleotide-DNA = a 3'-end 2'-deoxyribonucleotide-(2,3-dehydro-2,3-deoxyribose 5'-phosphate)-DNA + a 5'-end 5'-phospho-2'-deoxyribonucleoside-DNA + H(+). Functionally, involved in base excision repair of DNA damaged by oxidation or by mutagenic agents. Acts as a DNA glycosylase that recognizes and removes damaged bases. Has a preference for oxidized purines, such as 7,8-dihydro-8-oxoguanine (8-oxoG). Has AP (apurinic/apyrimidinic) lyase activity and introduces nicks in the DNA strand. Cleaves the DNA backbone by beta-delta elimination to generate a single-strand break at the site of the removed base with both 3'- and 5'-phosphates. The chain is Formamidopyrimidine-DNA glycosylase from Desulforamulus reducens (strain ATCC BAA-1160 / DSM 100696 / MI-1) (Desulfotomaculum reducens).